We begin with the raw amino-acid sequence, 544 residues long: Light-independent protochlorophyllide reductase subunit B (544 aa).

Asp36 lines the [4Fe-4S] cluster pocket. Residue Asp286 is the Proton donor of the active site. Gly421–Met422 contacts substrate.

This sequence belongs to the ChlB/BchB/BchZ family. Protochlorophyllide reductase is composed of three subunits; BchL, BchN and BchB. Forms a heterotetramer of two BchB and two BchN subunits. [4Fe-4S] cluster serves as cofactor.

The enzyme catalyses chlorophyllide a + oxidized 2[4Fe-4S]-[ferredoxin] + 2 ADP + 2 phosphate = protochlorophyllide a + reduced 2[4Fe-4S]-[ferredoxin] + 2 ATP + 2 H2O. The protein operates within porphyrin-containing compound metabolism; bacteriochlorophyll biosynthesis (light-independent). Its function is as follows. Component of the dark-operative protochlorophyllide reductase (DPOR) that uses Mg-ATP and reduced ferredoxin to reduce ring D of protochlorophyllide (Pchlide) to form chlorophyllide a (Chlide). This reaction is light-independent. The NB-protein (BchN-BchB) is the catalytic component of the complex. The polypeptide is Light-independent protochlorophyllide reductase subunit B (Chloroflexus aggregans (strain MD-66 / DSM 9485)).